The primary structure comprises 860 residues: Alanine--tRNA ligase (860 aa).

The Zn(2+) site is built by histidine 553, histidine 557, cysteine 655, and histidine 659.

Belongs to the class-II aminoacyl-tRNA synthetase family. The cofactor is Zn(2+).

The protein resides in the cytoplasm. It carries out the reaction tRNA(Ala) + L-alanine + ATP = L-alanyl-tRNA(Ala) + AMP + diphosphate. Functionally, catalyzes the attachment of alanine to tRNA(Ala) in a two-step reaction: alanine is first activated by ATP to form Ala-AMP and then transferred to the acceptor end of tRNA(Ala). Also edits incorrectly charged Ser-tRNA(Ala) and Gly-tRNA(Ala) via its editing domain. This Legionella pneumophila (strain Paris) protein is Alanine--tRNA ligase.